Consider the following 71-residue polypeptide: 26S proteasome complex subunit rpn15 (71 aa).

A disordered region spans residues 1-38; sequence MSRAALPSLENLEDDDEFEDFATENWPMKDTELDTGDD. Over residues 11-22 the composition is skewed to acidic residues; the sequence is NLEDDDEFEDFA. Residues 16–25 are UBS-II; it reads DEFEDFATEN. The UBS-I stretch occupies residues 38–49; the sequence is DTLWENNWDDED.

The protein belongs to the DSS1/SEM1 family. Interacts with mlo3, rae1, nup98/nup189 and nup146. Interacts with rad24. Interacts (via UBSs) with ubiquitin (ubi3/ubi5).

Its subcellular location is the cytoplasm. The protein localises to the nucleus. Versatile protein that might stabilize multiple protein complexes involved in diverse pathways. Subunit of the 26S proteasome which plays a role in ubiquitin-dependent proteolysis. Acts as a ubiquitin receptor of the 26S proteasome, by interacting with ubiquitin chains linked by 'Lys-63' and 'Lys-48'. Involved in nuclear export of specific sets of mRNAs. Links the mRNA adapter mlo3 to rae1 for targeting mRNA-protein complex to the proteins of the nucleoporin complex (NPC). Involved in recombinational repair of DNA. Plays a critical role in linking repair and checkpoint factors to damaged DNA sites by specifically recruiting rad24 and cdc25 to the DSBs. This is 26S proteasome complex subunit rpn15 (rpn15) from Schizosaccharomyces pombe (strain 972 / ATCC 24843) (Fission yeast).